The sequence spans 481 residues: 4-O-methyl-glucuronoyl methylesterase (481 aa).

Positions methionine 1 to alanine 21 are cleaved as a signal peptide. In terms of domain architecture, CBM1 spans glutamine 23–isoleucine 59. Disulfide bonds link cysteine 108/cysteine 143, cysteine 292/cysteine 428, and cysteine 324/cysteine 400. The GXSYXG catalytic site motif motif lies at glycine 291–glycine 296. Residue serine 293 is the Nucleophile of the active site. Substrate is bound by residues lysine 297, glutamine 339, glutamate 347, and tryptophan 391. Histidine 427 acts as the Proton donor/acceptor in catalysis.

Belongs to the carbohydrate esterase 15 (CE15) family.

It localises to the secreted. The catalysed reaction is a 4-O-methyl-alpha-D-glucuronosyl ester derivative + H2O = 4-O-methyl-alpha-D-glucuronate derivative + an alcohol + H(+). In terms of biological role, glucuronoyl esterase which may play a significant role in biomass degradation, as it is considered to disconnect hemicellulose from lignin through the hydrolysis of the ester bond between 4-O-methyl-D-glucuronic acid residues of glucuronoxylans and aromatic alcohols of lignin. The chain is 4-O-methyl-glucuronoyl methylesterase from Podospora anserina (strain S / ATCC MYA-4624 / DSM 980 / FGSC 10383) (Pleurage anserina).